A 1688-amino-acid chain; its full sequence is Voltage-dependent L-type calcium channel subunit alpha-1S (1688 aa).

Positions Met-1–Pro-24 are disordered. Residues Met-1–Lys-51 are Cytoplasmic-facing. Residues Asn-38–Phe-335 form an I repeat. A helical transmembrane segment spans residues Pro-52–Ile-70. The Extracellular portion of the chain corresponds to Phe-71–Lys-88. N-linked (GlcNAc...) asparagine glycosylation occurs at Asn-80. A helical membrane pass occupies residues Val-89–Tyr-108. At Gly-109–Asn-120 the chain is on the cytoplasmic side. The chain crosses the membrane as a helical span at residues Gly-121–Leu-139. At Glu-140–Asn-158 the chain is on the extracellular side. The helical transmembrane segment at Val-159–Val-177 threads the bilayer. The Cytoplasmic portion of the chain corresponds to Pro-178–His-196. Residues Ile-197–Phe-216 form a helical membrane-spanning segment. At Ser-217–Trp-307 the chain is on the extracellular side. An N-linked (GlcNAc...) asparagine glycan is attached at Asn-255. Glu-290 lines the Ca(2+) pocket. The chain crosses the membrane as a helical span at residues Pro-308–Ser-332. The Cytoplasmic segment spans residues Gly-333–Arg-431. The interval Gln-355–Glu-372 is binding to the beta subunit. The stretch at His-417–Leu-663 is one II repeat. Residues Phe-432–Thr-450 form a helical membrane-spanning segment. Topologically, residues Glu-451–Ile-465 are extracellular. A helical membrane pass occupies residues Ala-466–Leu-485. Residues Gly-486–Ser-493 lie on the Cytoplasmic side of the membrane. Residues Leu-494–Leu-512 form a helical membrane-spanning segment. Residues Val-513–Gly-522 lie on the Extracellular side of the membrane. The chain crosses the membrane as a helical span at residues Ile-523–Trp-541. The Cytoplasmic portion of the chain corresponds to Thr-542–Ser-560. The chain crosses the membrane as a helical span at residues Leu-561–Phe-580. Residues Gly-581–Ser-635 are Extracellular-facing. Residue Glu-613 coordinates Ca(2+). Residues Val-636–Val-660 traverse the membrane as a helical segment. Over Asp-661–Thr-797 the chain is Cytoplasmic. 2 disordered regions span residues Ala-672 to Glu-696 and Glu-729 to Arg-755. Positions Pro-740–Glu-749 are enriched in acidic residues. Residues Asn-784–Phe-1066 form an III repeat. A helical membrane pass occupies residues Thr-798 to Ala-816. Topologically, residues Glu-817 to Lys-832 are extracellular. A helical membrane pass occupies residues Leu-833–Tyr-852. Over Gly-853–Asn-864 the chain is Cytoplasmic. The helical transmembrane segment at Ser-865–Ile-883 threads the bilayer. Over Glu-884–Val-890 the chain is Extracellular. Residues Val-891–Ala-909 form a helical membrane-spanning segment. Residues Lys-910–Asn-928 are Cytoplasmic-facing. A helical membrane pass occupies residues Ile-929–Phe-948. At Lys-949–Glu-1038 the chain is on the extracellular side. The tract at residues Arg-986 to Lys-1075 is dihydropyridine binding. A Ca(2+)-binding site is contributed by Glu-1012. Residues Ile-1039–Ile-1063 traverse the membrane as a helical segment. Topologically, residues Val-1064–Ser-1116 are cytoplasmic. The IV repeat unit spans residues Asn-1103–Phe-1371. A helical membrane pass occupies residues Tyr-1117–Met-1135. Residues Gln-1136–Ile-1150 are Extracellular-facing. The chain crosses the membrane as a helical span at residues Leu-1151–Phe-1170. At Lys-1171 to Asp-1178 the chain is on the cytoplasmic side. Residues Pro-1179–Leu-1197 form a helical membrane-spanning segment. Over Ser-1198 to Ser-1218 the chain is Extracellular. Residues Ile-1219–Gly-1237 traverse the membrane as a helical segment. Residues Glu-1238–Tyr-1256 lie on the Cytoplasmic side of the membrane. A helical membrane pass occupies residues Val-1257–Phe-1276. The Extracellular segment spans residues Gly-1277 to Phe-1343. The interval Leu-1324–Lys-1390 is dihydropyridine binding. Residues Glu-1336–Ser-1379 form a phenylalkylamine binding region. Residues Ala-1344–Met-1368 form a helical membrane-spanning segment. The Cytoplasmic portion of the chain corresponds to Asp-1369–Asn-1688. Disordered regions lie at residues Pro-1635–Thr-1664 and Arg-1669–Asn-1688. A compositionally biased stretch (polar residues) spans Asp-1678 to Asn-1688.

It belongs to the calcium channel alpha-1 subunit (TC 1.A.1.11) family. Multisubunit complex consisting of alpha-1, alpha-2, beta and delta subunits in a 1:1:1:1 ratio. The channel activity is directed by the pore-forming and voltage-sensitive alpha-1 subunit. In many cases, this subunit is sufficient to generate voltage-sensitive calcium channel activity. The auxiliary subunits beta and alpha-2/delta linked by a disulfide bridge regulate the channel activity. An additional gamma subunit is present only in skeletal muscle L-type channel. Phosphorylation by PKA stimulates the calcium channel function. In terms of tissue distribution, skeletal muscle specific.

The protein localises to the membrane. Functionally, voltage-sensitive calcium channels (VSCC) mediate the entry of calcium ions into excitable cells and are also involved in a variety of calcium-dependent processes, including muscle contraction, gene expression, cell motility, cell division and cell death. The isoform alpha-1S gives rise to L-type calcium currents. Long-lasting (L-type) calcium channels belong to the 'high-voltage activated' (HVA) group. They are blocked by dihydropyridines (DHP), phenylalkylamines, and by benzothiazepines. Calcium channels containing the alpha-1S subunit play an important role in excitation-contraction coupling in skele|tal muscle. The sequence is that of Voltage-dependent L-type calcium channel subunit alpha-1S from Aquarana catesbeiana (American bullfrog).